The primary structure comprises 217 residues: Protein-L-isoaspartate O-methyltransferase (217 aa).

Residue serine 65 is part of the active site.

This sequence belongs to the methyltransferase superfamily. L-isoaspartyl/D-aspartyl protein methyltransferase family.

The protein resides in the cytoplasm. It carries out the reaction [protein]-L-isoaspartate + S-adenosyl-L-methionine = [protein]-L-isoaspartate alpha-methyl ester + S-adenosyl-L-homocysteine. Functionally, catalyzes the methyl esterification of L-isoaspartyl residues in peptides and proteins that result from spontaneous decomposition of normal L-aspartyl and L-asparaginyl residues. It plays a role in the repair and/or degradation of damaged proteins. The sequence is that of Protein-L-isoaspartate O-methyltransferase from Chlorobium limicola (strain DSM 245 / NBRC 103803 / 6330).